The sequence spans 259 residues: Proteasome subunit alpha type-7 (259 aa).

Belongs to the peptidase T1A family. In terms of assembly, the 26S proteasome consists of a 20S proteasome core and two 19S regulatory subunits. The 20S proteasome core is composed of 28 subunits that are arranged in four stacked rings, resulting in a barrel-shaped structure. The two end rings are each formed by seven alpha subunits, and the two central rings are each formed by seven beta subunits. The catalytic chamber with the active sites is on the inside of the barrel.

It localises to the cytoplasm. The protein localises to the nucleus. In terms of biological role, the proteasome is a multicatalytic proteinase complex which is characterized by its ability to cleave peptides with Arg, Phe, Tyr, Leu, and Glu adjacent to the leaving group at neutral or slightly basic pH. The proteasome has an ATP-dependent proteolytic activity. The chain is Proteasome subunit alpha type-7 (PAD1) from Solanum lycopersicum (Tomato).